A 473-amino-acid polypeptide reads, in one-letter code: Cytochrome P450 716A2 (473 aa).

A helical transmembrane segment spans residues 1–21 (MYLTIIFLFISSIIFPLLFFL). Cys420 provides a ligand contact to heme.

The protein belongs to the cytochrome P450 family. The cofactor is heme.

It localises to the membrane. Its function is as follows. Possesses triterpene oxidizing activity. Catalyzes the C28 hydroxylation of alpha-amyrin, beta-amyrin, and lupeol, producing uvaol, erythrodiol, and betulin, respectively. Catalyzes the C28 carboxylation of alpha- and beta-amyrin. Possesses 22alpha-hydroxylation activity against alpha- and beta-amaryn. This is Cytochrome P450 716A2 from Arabidopsis thaliana (Mouse-ear cress).